The sequence spans 1045 residues: MGPKQRVRKDNYWDSGEADKDREEAEKLHKKGQQQSDSDSDSDDIPISKKKPTSKFAPVDESSSESEESSSEEEVQKKPSKPAAKQSKKVAPTNNKKKPVVESSSSEEEESESESEESSEEDTKKKPSKPAAKQSKKVAPTNNNNNKKKPVVESSSEESESESEESSSEEDTKKKPSKPAAKQNKKAPAKKAAAVESSSESEEESSSSEEEEKPTKPTQNNNNKKNNAKKPPAAKPSAAKQQAKKPAPKKPEEPEVLSGFLLKQRQEEERIAREKEEKRIREEEEKKRAAEQKIIDDEKARLKSIENSKKRAEKKEKQAGAAAEADRMAKLAKLGVNISAVGEKKEKSTNKTKSGGKKQNQVSSITESVEKLKIEEPTSAPKDDVVEVMDSWDNDDYETVEEIQKKKEEEAKRKEEEEEAQRLAAKEEKKKAKAAAAAAAAALIPTTDPTTTFADKSYRSPIICILGHVDTGKTSLLDKIRNTNVQGGEARGITQQIGASFIPVDAIKEQTKSFAEKIKMDFKLPGLLLIDTPGHESFNNLRSRGSGLCDLAILVIDIMHGLQAQTLESINLLRMRKTPFIVALNKVDRIYDWKPCVNTDFKEAYKIQSKSAAQEFDYKVKDIIAALAGQELNAELYWRNKDHRKYVSLVPTSANTGEGISDLMLVVIQLMQKLMLDKVEFTNQLQCTLLEVKVIEGFGTTIDVVLVNGTLNEGDKIVVSGFNGPIETSIRSLLTPPPLRESRVKSQFINHKSIRAAMGIKIVAPGLEKAVPGTSLHVVGPNDDIEKIRAEAKREVDSVLNDVETSGIGVSVQASTLGSLEAFLNFLKKIKIPVANVAIGPVHKKHIMNASIMLDKDPKYAILLAFDVKIEESAIQAANEMKVQVLSDETIYLFEEKLKKHFGAIKEKLRAETASICVWPCILEVTNVFRNSNPILVGVRVKEGTLRIGTPICVPESNCADVGKVIGIKLNEKDVTLAKKDDVVSVAIDDNNTKTTIYRHFDDKKQWMSKITRESLDALKEGWSEDLTKQDIQLLKFMKTVYKIQ.

Disordered stretches follow at residues 1 to 325 and 339 to 384; these read MGPK…AAEA and SAVG…PKDD. Positions 8-27 are enriched in basic and acidic residues; it reads RKDNYWDSGEADKDREEAEK. Over residues 62–73 the composition is skewed to acidic residues; the sequence is SSSESEESSSEE. Low complexity predominate over residues 81–92; sequence KPAAKQSKKVAP. 3 stretches are compositionally biased toward acidic residues: residues 105 to 120, 155 to 169, and 199 to 212; these read SSEEEESESESEESSE, SSEESESESEESSSE, and SESEEESSSSEEEE. Residues 216-241 are compositionally biased toward low complexity; that stretch reads KPTQNNNNKKNNAKKPPAAKPSAAKQ. Over residues 264–325 the composition is skewed to basic and acidic residues; that stretch reads QRQEEERIAR…EKQAGAAAEA (62 aa). The span at 351–361 shows a compositional bias: low complexity; sequence KTKSGGKKQNQ. Over residues 368-384 the composition is skewed to basic and acidic residues; that stretch reads SVEKLKIEEPTSAPKDD. Residues 458 to 675 enclose the tr-type G domain; it reads YRSPIICILG…VVIQLMQKLM (218 aa). The tract at residues 467–474 is G1; that stretch reads GHVDTGKT. 467–474 lines the GTP pocket; that stretch reads GHVDTGKT. The interval 492–496 is G2; it reads GITQQ. The G3 stretch occupies residues 531 to 534; that stretch reads DTPG. Residues 585 to 588 form a G4 region; the sequence is NKVD. Residues 653-655 are G5; that stretch reads SAN.

This sequence belongs to the TRAFAC class translation factor GTPase superfamily. Classic translation factor GTPase family. IF-2 subfamily. Requires a monovalent cation as cofactor.

Its subcellular location is the cytoplasm. The catalysed reaction is GTP + H2O = GDP + phosphate + H(+). Plays a role in translation initiation. Translational GTPase that catalyzes the joining of the 40S and 60S subunits to form the 80S initiation complex with the initiator methionine-tRNA in the P-site base paired to the start codon. GTP binding and hydrolysis induces conformational changes in the enzyme that renders it active for productive interactions with the ribosome. The release of the enzyme after formation of the initiation complex is a prerequisite to form elongation-competent ribosomes. In Dictyostelium discoideum (Social amoeba), this protein is Eukaryotic translation initiation factor 5B (eif5b).